The following is a 348-amino-acid chain: F(420)H(2) dehydrogenase subunit H (348 aa).

The next 8 helical transmembrane spans lie at 20–40 (GVVG…AVWL), 93–113 (IFMM…AVFI), 127–147 (ISVL…FMIA), 172–192 (PLGI…IVEI), 198–218 (LLWN…ALMA), 259–279 (ILGS…PAFV), 286–306 (GLIA…MTII), and 328–348 (LLPL…YLGA).

The protein belongs to the complex I subunit 1 family. In terms of assembly, the FPO complex is composed of at least 13 different subunits. FpoA, FpoH, FpoJ, FpoK, FpoL, FpoM and FpoN proteins constitute the membrane sector of the complex.

Its subcellular location is the cell membrane. The enzyme catalyses methanophenazine + reduced coenzyme F420-(gamma-L-Glu)(n) = dihydromethanophenazine + oxidized coenzyme F420-(gamma-L-Glu)(n) + H(+). In terms of biological role, component of the F(420)H(2) dehydrogenase (FPO complex) which is part of the energy-conserving F(420)H(2):heterodisulfide oxidoreductase system. The membrane-bound electron transfer system of the complex plays an important role in the metabolism of methylotrophic methanogens when the organisms grow on methanol or methylamines. Catalyzes the oxidation of methanophenazine to dihydromethanophenazine. It shuttles electrons from F(420)H(2), via FAD and iron-sulfur (Fe-S) centers, to methanophenazine (an electron carrier in the membrane). It couples the redox reaction to proton translocation (for every two electrons transferred, two hydrogen ions are translocated across the cytoplasmic membrane), and thus conserves the redox energy in a proton gradient. This chain is F(420)H(2) dehydrogenase subunit H, found in Methanosarcina acetivorans (strain ATCC 35395 / DSM 2834 / JCM 12185 / C2A).